Consider the following 304-residue polypeptide: Coenzyme PQQ synthesis protein B (304 aa).

Belongs to the PqqB family.

The protein operates within cofactor biosynthesis; pyrroloquinoline quinone biosynthesis. May be involved in the transport of PQQ or its precursor to the periplasm. The polypeptide is Coenzyme PQQ synthesis protein B (Azoarcus sp. (strain BH72)).